Reading from the N-terminus, the 181-residue chain is Oligoribonuclease (181 aa).

Residues 8 to 171 enclose the Exonuclease domain; the sequence is LIWIDLEMTG…QDIQESIAEL (164 aa). Residue tyrosine 129 is part of the active site.

This sequence belongs to the oligoribonuclease family.

Its subcellular location is the cytoplasm. In terms of biological role, 3'-to-5' exoribonuclease specific for small oligoribonucleotides. This chain is Oligoribonuclease, found in Shewanella putrefaciens (strain CN-32 / ATCC BAA-453).